Here is a 357-residue protein sequence, read N- to C-terminus: Dynein axonemal assembly factor 10 (357 aa).

4 WD repeats span residues 80–127 (EFTN…IPIW), 132–170 (AHQGSISAIDAYADNLVVCGGKDGTIKVYDTRIKPNSAN), 184–223 (EQTNKSNCWSICTNDNNIIAGFENGDLNIYNLKTNSIQST), and 277–321 (EPNQ…IDKV).

In terms of assembly, interacts with PIH1D1; the interaction associates DNAAF10 with the R2TP complex. Interacts with several dynein axonemal assembly factors.

It is found in the dynein axonemal particle. Its function is as follows. Key assembly factor specifically required for the stability of axonemal dynein heavy chains in cytoplasm. This chain is Dynein axonemal assembly factor 10 (dnaaf10), found in Dictyostelium discoideum (Social amoeba).